The primary structure comprises 309 residues: Branched-chain-amino-acid aminotransferase (309 aa).

Lys-160 carries the post-translational modification N6-(pyridoxal phosphate)lysine.

It belongs to the class-IV pyridoxal-phosphate-dependent aminotransferase family. As to quaternary structure, homohexamer. Pyridoxal 5'-phosphate is required as a cofactor.

It carries out the reaction L-leucine + 2-oxoglutarate = 4-methyl-2-oxopentanoate + L-glutamate. The enzyme catalyses L-isoleucine + 2-oxoglutarate = (S)-3-methyl-2-oxopentanoate + L-glutamate. The catalysed reaction is L-valine + 2-oxoglutarate = 3-methyl-2-oxobutanoate + L-glutamate. It functions in the pathway amino-acid biosynthesis; L-isoleucine biosynthesis; L-isoleucine from 2-oxobutanoate: step 4/4. Its pathway is amino-acid biosynthesis; L-leucine biosynthesis; L-leucine from 3-methyl-2-oxobutanoate: step 4/4. It participates in amino-acid biosynthesis; L-valine biosynthesis; L-valine from pyruvate: step 4/4. Acts on leucine, isoleucine and valine. This Salmonella typhi protein is Branched-chain-amino-acid aminotransferase (ilvE).